A 380-amino-acid polypeptide reads, in one-letter code: GDP-mannose:cellobiosyl-diphosphopolyprenol alpha-mannosyltransferase (380 aa).

Belongs to the glycosyltransferase group 1 family. Glycosyltransferase 4 subfamily.

The enzyme catalyses beta-D-Glc-(1-&gt;4)-alpha-D-Glc-di-trans,octa-cis-undecaprenyl diphosphate + GDP-alpha-D-mannose = alpha-D-Man-(1-&gt;3)-beta-D-Glc-(1-&gt;4)-alpha-D-Glc-1-di-trans,octa-cis-undecaprenyl diphosphate + GDP + H(+). In terms of biological role, involved in the biosynthesis of the exopolysaccharide xanthan, a polymer that is comprised of repeating pentasaccharide units with the structure of a beta-(1,4)-linked D-glucose backbone with trisaccharide side chains composed of mannose-beta-(1,4)-glucuronic acid-beta-(1,2)-mannose attached to alternate glucose residues in the backbone by alpha-(1,3) linkages. Xanthan is involved in pathogenicity but has also been used in a variety of applications as a specialty polymer for commercial applications, including food additives, where they act as viscosifying, stabilizing, emulsifying, or gelling agents. The sequence is that of GDP-mannose:cellobiosyl-diphosphopolyprenol alpha-mannosyltransferase (gumH) from Xanthomonas campestris.